The primary structure comprises 322 residues: Cytochrome c biogenesis protein CcsA (322 aa).

The next 8 membrane-spanning stretches (helical) occupy residues 6-26 (LQLI…FLFF), 45-65 (LIAN…AGYF), 69-89 (NLYE…LFLY), 97-117 (LLDN…HFIL), 144-164 (MISY…LYFL), 230-250 (LITF…VWAN), 265-285 (WALI…IKGW), and 291-311 (AMVA…VNLL).

The protein belongs to the CcmF/CycK/Ccl1/NrfE/CcsA family. As to quaternary structure, may interact with Ccs1.

The protein resides in the plastid. Its subcellular location is the cyanelle thylakoid membrane. Its function is as follows. Required during biogenesis of c-type cytochromes (cytochrome c6 and cytochrome f) at the step of heme attachment. The polypeptide is Cytochrome c biogenesis protein CcsA (Cyanophora paradoxa).